We begin with the raw amino-acid sequence, 346 residues long: Peripherin-2 (346 aa).

At 1-24 (MALLKVKFDQKKRVKLAQGLWLMN) the chain is on the cytoplasmic side. The helical transmembrane segment at 25–43 (WLSVLAGIVLFSLGLFLKI) threads the bilayer. The Lumenal portion of the chain corresponds to 44 to 61 (ELRKRSEVMNNSESHFVP). An N-linked (GlcNAc...) asparagine glycan is attached at Asn53. The helical transmembrane segment at 62 to 80 (NSLIGVGVLSCVFNSLAGK) threads the bilayer. The Cytoplasmic portion of the chain corresponds to 81–99 (ICYDALDPAKYAKWKPWLK). The chain crosses the membrane as a helical span at residues 100 to 123 (PYLAVCIFFNVILFLVALCCFLLR). At 124 to 264 (GSLESTLAYG…LNYYSSLMNS (141 aa)) the chain is on the lumenal side. An N-linked (GlcNAc...) asparagine glycan is attached at Asn229. A helical transmembrane segment spans residues 265–290 (MGVVTLLVWLFEVSITAGLRYLHTAL). Over 291-346 (ESVSNPEDPECESEGWLLEKSVPETWKAFLESFKKLGKSNQVEAEGADAGPAPEAG) the chain is Cytoplasmic. The tract at residues 341-346 (PAPEAG) is interaction with MREG.

The protein belongs to the PRPH2/ROM1 family. In terms of assembly, homodimer; disulfide-linked. Forms a homotetramer. Forms a heterotetramer with ROM1. Homotetramer and heterotetramer core complexes go on to form higher order complexes by formation of intermolecular disulfide bonds. Interacts with MREG. Interacts with STX3 isoform 3B. Interacts with SNAP25. Expressed in the retina (at protein level).

It is found in the membrane. It localises to the cell projection. Its subcellular location is the cilium. The protein localises to the photoreceptor outer segment. The protein resides in the photoreceptor inner segment. Functionally, essential for retina photoreceptor outer segment disk morphogenesis, may also play a role with ROM1 in the maintenance of outer segment disk structure. Required for the maintenance of retinal outer nuclear layer thickness. Required for the correct development and organization of the photoreceptor inner segment. This Mus musculus (Mouse) protein is Peripherin-2 (Prph2).